We begin with the raw amino-acid sequence, 596 residues long: Elongation factor 4 (596 aa).

A tr-type G domain is found at 2–184; sequence KHIRNFSIIA…VIVEQIPPPE (183 aa). GTP is bound by residues 14–19 and 131–134; these read DHGKST and NKID.

It belongs to the TRAFAC class translation factor GTPase superfamily. Classic translation factor GTPase family. LepA subfamily.

The protein localises to the cell inner membrane. It catalyses the reaction GTP + H2O = GDP + phosphate + H(+). Its function is as follows. Required for accurate and efficient protein synthesis under certain stress conditions. May act as a fidelity factor of the translation reaction, by catalyzing a one-codon backward translocation of tRNAs on improperly translocated ribosomes. Back-translocation proceeds from a post-translocation (POST) complex to a pre-translocation (PRE) complex, thus giving elongation factor G a second chance to translocate the tRNAs correctly. Binds to ribosomes in a GTP-dependent manner. The protein is Elongation factor 4 of Shewanella oneidensis (strain ATCC 700550 / JCM 31522 / CIP 106686 / LMG 19005 / NCIMB 14063 / MR-1).